A 664-amino-acid polypeptide reads, in one-letter code: Glycine--tRNA ligase beta subunit (664 aa).

It belongs to the class-II aminoacyl-tRNA synthetase family. Tetramer of two alpha and two beta subunits.

The protein localises to the cytoplasm. It catalyses the reaction tRNA(Gly) + glycine + ATP = glycyl-tRNA(Gly) + AMP + diphosphate. This is Glycine--tRNA ligase beta subunit from Rickettsia felis (strain ATCC VR-1525 / URRWXCal2) (Rickettsia azadi).